Consider the following 226-residue polypeptide: MKKKKKNYTFNKKNKKIYNIKEAIQLLKNKKSAKFIESIDAAFNLNIDPKKSEQNVRGSVLLPHGTGNTIKIAVFTTGKNIKIAQLAGADYVGLEDLANLITNQKKKIDLVIASPETMHIVGKLGPILGPKGIMPNPKFGTITKDIKKAIQEAKKGKINYRNDKNGIIHSNFGKINFSEKELYENFLTLYQDIKKSQPNQFKGIYYKKINISTTMGPGIIIDHLSL.

The protein belongs to the universal ribosomal protein uL1 family. As to quaternary structure, part of the 50S ribosomal subunit.

In terms of biological role, binds directly to 23S rRNA. The L1 stalk is quite mobile in the ribosome, and is involved in E site tRNA release. Protein L1 is also a translational repressor protein, it controls the translation of the L11 operon by binding to its mRNA. This chain is Large ribosomal subunit protein uL1, found in Buchnera aphidicola subsp. Cinara cedri (strain Cc).